Reading from the N-terminus, the 335-residue chain is Spliceosome-associated protein 49 (335 aa).

RRM domains are found at residues 13 to 84 (IYLG…PIRV) and 101 to 172 (LFVG…PITV). The segment at 204–223 (VTPQSTLPPGFSPATPAPTS) is disordered.

It belongs to the SF3B4 family.

The protein localises to the nucleus. The protein is Spliceosome-associated protein 49 (sap49) of Schizosaccharomyces pombe (strain 972 / ATCC 24843) (Fission yeast).